The primary structure comprises 528 residues: Benzoylformate decarboxylase (528 aa).

The Mg(2+) site is built by glutamine 117 and leucine 118. The tract at residues 377-460 (TSTVTAFWQR…IILKNGTYGA (84 aa)) is thiamine pyrophosphate binding. Ca(2+) contacts are provided by aspartate 428, asparagine 455, and threonine 457.

This sequence belongs to the TPP enzyme family. Homotetramer. Ca(2+) serves as cofactor. It depends on thiamine diphosphate as a cofactor. Requires Mg(2+) as cofactor.

The catalysed reaction is phenylglyoxylate + H(+) = benzaldehyde + CO2. It participates in aromatic compound metabolism; (R)-mandelate degradation; benzoate from (R)-mandelate: step 3/4. The protein is Benzoylformate decarboxylase (mdlC) of Pseudomonas aeruginosa (strain ATCC 15692 / DSM 22644 / CIP 104116 / JCM 14847 / LMG 12228 / 1C / PRS 101 / PAO1).